A 666-amino-acid polypeptide reads, in one-letter code: Nuclear distribution protein nudE homolog 1 (666 aa).

Residues 14-195 (EEEIAHYREK…KDQLARAIAT (182 aa)) are a coiled coil. 4 disordered regions span residues 40–64 (EFQQ…KQQA), 220–310 (DDIN…SGIP), 369–388 (KRVT…PAPH), and 397–666 (DHNT…KVKK). Residues 251–274 (RSGTMSSIPVASPSTKRFSQQIPH) are compositionally biased toward polar residues. Low complexity-rich tracts occupy residues 275–287 (SPSF…STTS) and 372–383 (TSTTSTTSSTTT). The span at 400–410 (TTPTAQSQQFP) shows a compositional bias: polar residues. Composition is skewed to low complexity over residues 449 to 465 (PTFR…LPSR), 473 to 485 (ASGS…SGTA), and 536 to 554 (SATP…STSN). Composition is skewed to polar residues over residues 587-599 (RQSL…TPTT) and 614-638 (SSLS…SGRP).

This sequence belongs to the nudE family. In terms of assembly, self-associates. Interacts with PAC1.

Its subcellular location is the cytoplasm. The protein resides in the cytoskeleton. Its function is as follows. Required for nuclear migration. This Cryptococcus neoformans var. neoformans serotype D (strain JEC21 / ATCC MYA-565) (Filobasidiella neoformans) protein is Nuclear distribution protein nudE homolog 1 (NDE1).